The following is a 585-amino-acid chain: Vacuolar protein 8 (585 aa).

The N-myristoyl glycine moiety is linked to residue Gly2. S-palmitoyl cysteine attachment occurs at residues Cys4, Cys5, and Cys7. 9 ARM repeats span residues 39–76, 77–116, 118–157, 159–198, 200–239, 243–282, 284–323, 325–365, and 409–448; these read NRSD…FAEI, TEKD…NLAV, TENK…NLAT, DDNK…NMTH, GENR…NIAV, NRKK…NLAS, SGYQ…NISI, PLNE…NLAA, and DDLK…NLCS. Low complexity predominate over residues 531-562; that stretch reads QIGQTTTTTTTNITNNNTNTNTNTNTTTSTSN. The interval 531–565 is disordered; it reads QIGQTTTTTTTNITNNNTNTNTNTNTTTSTSNEDQ.

Belongs to the beta-catenin family.

It is found in the vacuole membrane. Its function is as follows. Functions in both vacuole inheritance and protein targeting from the cytoplasm to vacuole. Vacuole inheritance has a role in the regulation of hyphal cell division. This chain is Vacuolar protein 8 (VAC8), found in Candida albicans (strain SC5314 / ATCC MYA-2876) (Yeast).